The sequence spans 149 residues: Endoribonuclease YbeY (149 aa).

Zn(2+) contacts are provided by His-113, His-117, and His-123.

This sequence belongs to the endoribonuclease YbeY family. The cofactor is Zn(2+).

Its subcellular location is the cytoplasm. Its function is as follows. Single strand-specific metallo-endoribonuclease involved in late-stage 70S ribosome quality control and in maturation of the 3' terminus of the 16S rRNA. This Saccharophagus degradans (strain 2-40 / ATCC 43961 / DSM 17024) protein is Endoribonuclease YbeY.